A 396-amino-acid polypeptide reads, in one-letter code: Tryptophan synthase beta chain (396 aa).

Lysine 86 is subject to N6-(pyridoxal phosphate)lysine.

This sequence belongs to the TrpB family. As to quaternary structure, tetramer of two alpha and two beta chains. Pyridoxal 5'-phosphate serves as cofactor.

It carries out the reaction (1S,2R)-1-C-(indol-3-yl)glycerol 3-phosphate + L-serine = D-glyceraldehyde 3-phosphate + L-tryptophan + H2O. It participates in amino-acid biosynthesis; L-tryptophan biosynthesis; L-tryptophan from chorismate: step 5/5. The beta subunit is responsible for the synthesis of L-tryptophan from indole and L-serine. This is Tryptophan synthase beta chain from Erwinia tasmaniensis (strain DSM 17950 / CFBP 7177 / CIP 109463 / NCPPB 4357 / Et1/99).